Reading from the N-terminus, the 472-residue chain is Arabinose-proton symporter (472 aa).

Topologically, residues 1–29 are cytoplasmic; the sequence is MVTINTESALTPRSLRDTRRMNMFVSVAA. The chain crosses the membrane as a helical span at residues 30–50; the sequence is AVAGLLFGLDIGVIAGALPFI. Topologically, residues 51-63 are periplasmic; the sequence is TDHFVLTSRLQEW. The helical transmembrane segment at 64 to 84 threads the bilayer; it reads VVSSMMLGAAIGALFNGWLSF. At 85–91 the chain is on the cytoplasmic side; sequence RLGRKYS. Residues 92–112 form a helical membrane-spanning segment; sequence LMAGAILFVLGSIGSAFATSV. Residues 113 to 114 are Periplasmic-facing; it reads EM. Residues 115–135 form a helical membrane-spanning segment; sequence LIAARVVLGIAVGIASYTAPL. At 136 to 154 the chain is on the cytoplasmic side; the sequence is YLSEMASENVRGKMISMYQ. Residues 155–175 form a helical membrane-spanning segment; sequence LMVTLGIVLAFLSDTAFSYSG. At 176–178 the chain is on the periplasmic side; that stretch reads NWR. The helical transmembrane segment at 179–199 threads the bilayer; the sequence is AMLGVLALPAVLLIILVVFLP. Topologically, residues 200–257 are cytoplasmic; that stretch reads NSPRWLAEKGRHIEAEEVLRMLRDTSEKAREELNEIRESLKLKQGGWALFKINRNVRR. Residues 258–278 form a helical membrane-spanning segment; that stretch reads AVFLGMLLQAMQQFTGMNIIM. Residues 279 to 297 are Periplasmic-facing; the sequence is YYAPRIFKMAGFTTTEQQM. A helical transmembrane segment spans residues 298–318; that stretch reads IATLVVGLTFMFATFIAVFTV. The Cytoplasmic segment spans residues 319-325; that stretch reads DKAGRKP. Residues 326 to 346 traverse the membrane as a helical segment; that stretch reads ALKIGFSVMALGTLVLGYCLM. The Periplasmic segment spans residues 347–361; sequence QFDNGTASSGLSWLS. The chain crosses the membrane as a helical span at residues 362 to 382; it reads VGMTMMCIAGYAMSAAPVVWI. The Cytoplasmic segment spans residues 383–404; it reads LCSEIQPLKCRDFGITCSTTTN. Helical transmembrane passes span 405-425 and 426-446; these read WVSN…IGAA and GTFW…FWLI. Residues 447-472 are Cytoplasmic-facing; it reads PETKNVTLEHIERKLMAGEKLRNIGV.

Belongs to the major facilitator superfamily. Sugar transporter (TC 2.A.1.1) family.

It is found in the cell inner membrane. The enzyme catalyses L-arabinose(in) + H(+)(in) = L-arabinose(out) + H(+)(out). Uptake of L-arabinose across the cytoplasmic membrane with the concomitant transport of protons into the cell (symport system). This is Arabinose-proton symporter (araE) from Escherichia coli O157:H7.